The sequence spans 524 residues: Strychnine-10-hydroxylase (524 aa).

A helical membrane pass occupies residues 6–26; the sequence is LYIHTAILGLISLFLILHFVF. Cys466 contacts heme.

This sequence belongs to the cytochrome P450 family. Requires heme as cofactor.

Its subcellular location is the membrane. The enzyme catalyses strychnine + reduced [NADPH--hemoprotein reductase] + O2 = 10-hydroxystrychnine + oxidized [NADPH--hemoprotein reductase] + H2O + H(+). Its pathway is alkaloid biosynthesis. Monooxygenase involved in the biosynthesis of curare monoterpene indole alkaloids (MIAs), natural products such as strychnine, a neurotoxic compound used as a pesticide to control rodents, and its pharmacologically active derivatives, including brucine, used to regulate blood pressure. Curare alkaloids act as animal glycine receptor antagonists. Catalyzes the conversion of strychnine to 10-OH strychnine. The sequence is that of Strychnine-10-hydroxylase from Strychnos nux-vomica (Poison nut).